An 89-amino-acid polypeptide reads, in one-letter code: Small ribosomal subunit protein uS15 (89 aa).

It belongs to the universal ribosomal protein uS15 family. As to quaternary structure, part of the 30S ribosomal subunit. Forms a bridge to the 50S subunit in the 70S ribosome, contacting the 23S rRNA.

In terms of biological role, one of the primary rRNA binding proteins, it binds directly to 16S rRNA where it helps nucleate assembly of the platform of the 30S subunit by binding and bridging several RNA helices of the 16S rRNA. Its function is as follows. Forms an intersubunit bridge (bridge B4) with the 23S rRNA of the 50S subunit in the ribosome. The chain is Small ribosomal subunit protein uS15 from Brevibacillus brevis (strain 47 / JCM 6285 / NBRC 100599).